Consider the following 559-residue polypeptide: Urocanate hydratase (559 aa).

NAD(+) is bound by residues 53–54 (GG), Gln-131, 177–179 (GMG), Glu-197, Arg-202, 243–244 (NA), 264–268 (QTSAH), 274–275 (YL), and Tyr-323. Cys-411 is a catalytic residue. Position 493 (Gly-493) interacts with NAD(+).

The protein belongs to the urocanase family. Requires NAD(+) as cofactor.

The protein resides in the cytoplasm. The enzyme catalyses 4-imidazolone-5-propanoate = trans-urocanate + H2O. The protein operates within amino-acid degradation; L-histidine degradation into L-glutamate; N-formimidoyl-L-glutamate from L-histidine: step 2/3. Its function is as follows. Catalyzes the conversion of urocanate to 4-imidazolone-5-propionate. The polypeptide is Urocanate hydratase (Pseudomonas aeruginosa (strain ATCC 15692 / DSM 22644 / CIP 104116 / JCM 14847 / LMG 12228 / 1C / PRS 101 / PAO1)).